A 219-amino-acid polypeptide reads, in one-letter code: ATP phosphoribosyltransferase (219 aa).

The protein belongs to the ATP phosphoribosyltransferase family. Short subfamily. As to quaternary structure, heteromultimer composed of HisG and HisZ subunits.

It is found in the cytoplasm. It catalyses the reaction 1-(5-phospho-beta-D-ribosyl)-ATP + diphosphate = 5-phospho-alpha-D-ribose 1-diphosphate + ATP. Its pathway is amino-acid biosynthesis; L-histidine biosynthesis; L-histidine from 5-phospho-alpha-D-ribose 1-diphosphate: step 1/9. Functionally, catalyzes the condensation of ATP and 5-phosphoribose 1-diphosphate to form N'-(5'-phosphoribosyl)-ATP (PR-ATP). Has a crucial role in the pathway because the rate of histidine biosynthesis seems to be controlled primarily by regulation of HisG enzymatic activity. The sequence is that of ATP phosphoribosyltransferase from Clostridium kluyveri (strain NBRC 12016).